The sequence spans 505 residues: Buccalin (505 aa).

An N-terminal signal peptide occupies residues 1–25 (MAHHRGHRHILLYVSLALSLGLALA). Residues 26 to 62 (EDATDPSDDTGSFDDVEAVSEEADLDPYSMSQELNKR) constitute a propeptide that is removed on maturation. Val74 carries the post-translational modification Valine amide. A leucine amide mark is found at Leu88 and Leu102. Gln106 is modified (pyrrolidone carboxylic acid). Ile116 is subject to Isoleucine amide. Leucine amide is present on residues Leu129, Leu143, Leu157, Leu171, Leu185, Leu199, Leu213, Leu227, Leu241, Leu254, Leu267, Leu281, Leu294, Leu307, Leu321, and Leu335. Glu349 carries the glutamic acid 1-amide modification. Residues Leu363, Leu377, Leu391, Leu405, Leu419, and Leu433 each carry the leucine amide modification. Isoleucine amide is present on residues Ile447 and Ile461. Pyrrolidone carboxylic acid is present on Gln465. The disordered stretch occupies residues 472–505 (SGRLGKRSSSEQEEEDVRQVEKRSTTEEQSSKSL). Leu475 is modified (leucine amide). The span at 488-505 (VRQVEKRSTTEEQSSKSL) shows a compositional bias: basic and acidic residues. A propeptide spanning residues 495 to 505 (STTEEQSSKSL) is cleaved from the precursor.

Cholinergic motor neuron B15 innervating buccal muscles in Aplysia.

The protein localises to the secreted. Its function is as follows. Modulatory neuropeptide, acting presynaptically on nerve terminals to inhibit acetylcholine release. The chain is Buccalin from Aplysia californica (California sea hare).